The primary structure comprises 306 residues: D-alanine--D-alanine ligase (306 aa).

The ATP-grasp domain maps to 101-303 (KLLWQGAGLP…FSQLVVRILE (203 aa)). 134-189 (ISALGLPLIVKPSREGSSVGMTKVVEENALQGALSLAFQHDDEILIEKWLCGPEFT) is a binding site for ATP. Mg(2+) is bound by residues D257, E270, and N272.

It belongs to the D-alanine--D-alanine ligase family. The cofactor is Mg(2+). Requires Mn(2+) as cofactor.

The protein localises to the cytoplasm. The enzyme catalyses 2 D-alanine + ATP = D-alanyl-D-alanine + ADP + phosphate + H(+). Its pathway is cell wall biogenesis; peptidoglycan biosynthesis. Its function is as follows. Cell wall formation. The protein is D-alanine--D-alanine ligase of Salmonella paratyphi A (strain ATCC 9150 / SARB42).